Reading from the N-terminus, the 448-residue chain is UDP-N-acetylmuramate--L-alanine ligase (448 aa).

118–124 (GTHGKTT) is an ATP binding site.

This sequence belongs to the MurCDEF family.

Its subcellular location is the cytoplasm. The enzyme catalyses UDP-N-acetyl-alpha-D-muramate + L-alanine + ATP = UDP-N-acetyl-alpha-D-muramoyl-L-alanine + ADP + phosphate + H(+). It participates in cell wall biogenesis; peptidoglycan biosynthesis. Cell wall formation. This Flavobacterium psychrophilum (strain ATCC 49511 / DSM 21280 / CIP 103535 / JIP02/86) protein is UDP-N-acetylmuramate--L-alanine ligase.